Here is a 263-residue protein sequence, read N- to C-terminus: Acyl-[acyl-carrier-protein]--UDP-N-acetylglucosamine O-acyltransferase (263 aa).

The protein belongs to the transferase hexapeptide repeat family. LpxA subfamily. In terms of assembly, homotrimer.

It is found in the cytoplasm. It catalyses the reaction a (3R)-hydroxyacyl-[ACP] + UDP-N-acetyl-alpha-D-glucosamine = a UDP-3-O-[(3R)-3-hydroxyacyl]-N-acetyl-alpha-D-glucosamine + holo-[ACP]. It functions in the pathway glycolipid biosynthesis; lipid IV(A) biosynthesis; lipid IV(A) from (3R)-3-hydroxytetradecanoyl-[acyl-carrier-protein] and UDP-N-acetyl-alpha-D-glucosamine: step 1/6. Its function is as follows. Involved in the biosynthesis of lipid A, a phosphorylated glycolipid that anchors the lipopolysaccharide to the outer membrane of the cell. The polypeptide is Acyl-[acyl-carrier-protein]--UDP-N-acetylglucosamine O-acyltransferase (Xanthomonas oryzae pv. oryzae (strain PXO99A)).